The sequence spans 85 residues: Large ribosomal subunit protein bL27 (85 aa).

A disordered region spans residues 1-23 (MAHKKAGGSSRNGRDSESKRLGV).

The protein belongs to the bacterial ribosomal protein bL27 family.

The sequence is that of Large ribosomal subunit protein bL27 from Methylococcus capsulatus (strain ATCC 33009 / NCIMB 11132 / Bath).